We begin with the raw amino-acid sequence, 347 residues long: Heme A synthase (347 aa).

8 helical membrane-spanning segments follow: residues 14 to 34 (VKIW…IGGI), 96 to 116 (FHRL…LYFM), 129 to 149 (FILI…MVKS), 162 to 182 (LAMH…HFLL), 199 to 219 (VFYI…LVAG), 260 to 280 (FIHE…LLVL), 287 to 307 (MYLL…TFIY), and 311 to 331 (IILA…SIYL). His-262 is a binding site for heme. Residue His-317 coordinates heme.

The protein belongs to the COX15/CtaA family. Type 2 subfamily. Interacts with CtaB. The cofactor is heme b.

The protein resides in the cell membrane. It carries out the reaction Fe(II)-heme o + 2 A + H2O = Fe(II)-heme a + 2 AH2. It participates in porphyrin-containing compound metabolism; heme A biosynthesis; heme A from heme O: step 1/1. In terms of biological role, catalyzes the conversion of heme O to heme A by two successive hydroxylations of the methyl group at C8. The first hydroxylation forms heme I, the second hydroxylation results in an unstable dihydroxymethyl group, which spontaneously dehydrates, resulting in the formyl group of heme A. The protein is Heme A synthase of Ehrlichia ruminantium (strain Welgevonden).